The following is a 96-amino-acid chain: Pro-glucagon (96 aa).

2 stretches are compositionally biased toward basic and acidic residues: residues 1–12 (LQDAEDSSRFDA) and 19–30 (EARELSTPKXHS). The segment at 1–35 (LQDAEDSSRFDADDTLAGEARELSTPKXHSEGTFS) is disordered.

It belongs to the glucagon family.

Its subcellular location is the secreted. Functionally, plays a key role in glucose metabolism and homeostasis. Regulates blood glucose by increasing gluconeogenesis and decreasing glycolysis. The sequence is that of Pro-glucagon (gcg) from Myoxocephalus scorpius (Shorthorn sculpin).